Consider the following 220-residue polypeptide: Ribosomal RNA small subunit methyltransferase G 1 (220 aa).

Residues glycine 79, phenylalanine 84, and arginine 150 each coordinate S-adenosyl-L-methionine.

This sequence belongs to the methyltransferase superfamily. RNA methyltransferase RsmG family.

The protein localises to the cytoplasm. It catalyses the reaction guanosine(527) in 16S rRNA + S-adenosyl-L-methionine = N(7)-methylguanosine(527) in 16S rRNA + S-adenosyl-L-homocysteine. In terms of biological role, specifically methylates the N7 position of guanine in position 527 of 16S rRNA. The polypeptide is Ribosomal RNA small subunit methyltransferase G 1 (Syntrophobacter fumaroxidans (strain DSM 10017 / MPOB)).